The chain runs to 286 residues: Translocon-associated protein subunit alpha (286 aa).

An N-terminal signal peptide occupies residues 1–21 (MRLLPRLLLLLLLVFPATVLL). Topologically, residues 22–207 (RGGPGGSLAE…EREDGLDGQT (186 aa)) are lumenal. Positions 28–83 (SLAEAQDLSEDEETVEDSVIEDEDDEAEVEEDEPTDLAEDREEEDVSGEPEASPSA) are disordered. The segment covering 34–75 (DLSEDEETVEDSVIEDEDDEAEVEEDEPTDLAEDREEEDVSG) has biased composition (acidic residues). N-linked (GlcNAc...) asparagine glycosylation is found at asparagine 136 and asparagine 191. The chain crosses the membrane as a helical span at residues 208 to 228 (IFMYMSLAGLGLLVVVGLHQL). Topologically, residues 229-286 (LESRNRKRPIQKVEMGTSSQNDVDMSWIPQETLNQINKASPRRLPRKRPQKRSVGSDE) are cytoplasmic. The residue at position 247 (serine 247) is a Phosphoserine. Phosphothreonine is present on threonine 260. A disordered region spans residues 264–286 (INKASPRRLPRKRPQKRSVGSDE). Serine 268 carries the post-translational modification Phosphoserine. Residues 268–279 (SPRRLPRKRPQK) show a composition bias toward basic residues.

Belongs to the TRAP-alpha family. In terms of assembly, heterotetramer of TRAP-alpha, TRAP-beta, TRAP-delta and TRAP-gamma. Interacts with palmitoylated calnexin (CALX), the interaction is required for efficient folding of glycosylated proteins. Phosphorylated in its cytoplasmic tail.

The protein localises to the endoplasmic reticulum membrane. Functionally, TRAP proteins are part of a complex whose function is to bind calcium to the ER membrane and thereby regulate the retention of ER resident proteins. May be involved in the recycling of the translocation apparatus after completion of the translocation process or may function as a membrane-bound chaperone facilitating folding of translocated proteins. In Oryctolagus cuniculus (Rabbit), this protein is Translocon-associated protein subunit alpha (SSR1).